We begin with the raw amino-acid sequence, 419 residues long: Dimethylallyltryptophan synthase 1 (419 aa).

Positions 81, 82, and 90 each coordinate L-tryptophan. Phe81 serves as a coordination point for L-tyrosine. (2E)-geranyl diphosphate contacts are provided by Arg105, Lys187, Tyr189, Arg251, Lys253, and Tyr255. 6 residues coordinate dimethylallyl diphosphate: Arg105, Lys187, Tyr189, Arg251, Lys253, and Tyr255. Position 257 (Arg257) interacts with L-tryptophan. Arg257 contributes to the L-tyrosine binding site. Lys332 and Tyr334 together coordinate (2E)-geranyl diphosphate. Dimethylallyl diphosphate is bound by residues Lys332 and Tyr334. Residue Tyr389 participates in L-tryptophan binding. Tyr389 contributes to the L-tyrosine binding site. Position 404 (Tyr404) interacts with (2E)-geranyl diphosphate.

It belongs to the tryptophan dimethylallyltransferase family.

The catalysed reaction is L-tyrosine + dimethylallyl diphosphate = 4-O-dimethylallyl-L-tyrosine + diphosphate. Functionally, dimethylallyltryptophan synthase; part of the DMATS1 gene cluster that mediates the biosynthesis of a reversely N-prenylated monomeric L-tryptophan (r-N-DMAT). DMATS1 catalyzes the reverse N-prenylation of L-Trp with DMAPP to yield N-dimethylallyl-L-tryptophan. DMATS1 exhibits unusually broad substrate specificity and can utilize geranyl diphosphate (GPP) or L-Tyr as an alternative prenyl donor or acceptor, respectively. Is able to catalyze both forward and reverse prenylation, i.e., at C1 or C3 of DMAPP; and it can catalyze C-N and C-O bond-forming reactions. The main product of the cluster is the reverse-N-dimethylallyl-L-tryptophan (r-N-DMAT) produced by the dimethylallyltryptophan synthase DMATS1 and it remains unclear whether this metabolite undergoes further modifications when silent gene clusters are activated. The acetylated form of r-N-DMAT, ac-r-N-DMAT, is also produced. The roles of the cytochrome P450 monooxygenase FFUJ_09176 and the methyltransferase FFUJ_09178 have still to be elucidated. This Gibberella fujikuroi (strain CBS 195.34 / IMI 58289 / NRRL A-6831) (Bakanae and foot rot disease fungus) protein is Dimethylallyltryptophan synthase 1.